Here is a 293-residue protein sequence, read N- to C-terminus: Nucleotide-binding protein cauri_1197 (293 aa).

16–23 is a binding site for ATP; it reads GMSGGGLT. A GTP-binding site is contributed by 67 to 70; that stretch reads DVRS.

Belongs to the RapZ-like family.

Its function is as follows. Displays ATPase and GTPase activities. The protein is Nucleotide-binding protein cauri_1197 of Corynebacterium aurimucosum (strain ATCC 700975 / DSM 44827 / CIP 107346 / CN-1) (Corynebacterium nigricans).